Here is a 172-residue protein sequence, read N- to C-terminus: Large ribosomal subunit protein uL5 (172 aa).

This sequence belongs to the universal ribosomal protein uL5 family. Component of the large ribosomal subunit.

It localises to the nucleus. The protein resides in the cytoplasm. In terms of biological role, component of the ribosome, a large ribonucleoprotein complex responsible for the synthesis of proteins in the cell. The small ribosomal subunit (SSU) binds messenger RNAs (mRNAs) and translates the encoded message by selecting cognate aminoacyl-transfer RNA (tRNA) molecules. The large subunit (LSU) contains the ribosomal catalytic site termed the peptidyl transferase center (PTC), which catalyzes the formation of peptide bonds, thereby polymerizing the amino acids delivered by tRNAs into a polypeptide chain. The nascent polypeptides leave the ribosome through a tunnel in the LSU and interact with protein factors that function in enzymatic processing, targeting, and the membrane insertion of nascent chains at the exit of the ribosomal tunnel. This Tetrahymena thermophila protein is Large ribosomal subunit protein uL5 (RPL11).